A 523-amino-acid polypeptide reads, in one-letter code: Type 2 DNA topoisomerase 6 subunit B (523 aa).

Residues asparagine 48, aspartate 80, 101–102 (SK), 110–117 (GQQGLGCS), and lysine 436 each bind ATP.

It belongs to the TOP6B family. As to quaternary structure, homodimer. Heterotetramer of two Top6A and two Top6B chains.

The enzyme catalyses ATP-dependent breakage, passage and rejoining of double-stranded DNA.. Its function is as follows. Relaxes both positive and negative superturns and exhibits a strong decatenase activity. This is Type 2 DNA topoisomerase 6 subunit B from Methanothermobacter thermautotrophicus (strain ATCC 29096 / DSM 1053 / JCM 10044 / NBRC 100330 / Delta H) (Methanobacterium thermoautotrophicum).